The chain runs to 299 residues: Taste receptor type 2 member 5 (299 aa).

Position 1 (Met-1) is a topological domain, extracellular. A helical transmembrane segment spans residues 2–22; the sequence is LSAGLGLLMLVAVVEFLIGLI. The Cytoplasmic portion of the chain corresponds to 23–45; it reads GNGVLVVWSFREWIRKFSWSSYN. A helical membrane pass occupies residues 46-66; the sequence is LIILGLAGCRFVLQWLIILDL. The Extracellular portion of the chain corresponds to 67–82; sequence SLFPLFQSSRWLRYLS. A helical membrane pass occupies residues 83-103; that stretch reads IFWVLVSQASLWFATFLSVFY. The Cytoplasmic portion of the chain corresponds to 104–127; sequence CKKITTFDHPAYLWLKQRAYNLSL. A helical membrane pass occupies residues 128–148; the sequence is WCLLGYFIINLLLTVQIGLMF. Topologically, residues 149-175 are extracellular; sequence YHPPQGNSSIRYPFESWQYLYAFRLNS. The N-linked (GlcNAc...) asparagine glycan is linked to Asn-155. Residues 176 to 196 traverse the membrane as a helical segment; sequence GSYLPLMVFLVSSGMLIVSLY. At 197–223 the chain is on the cytoplasmic side; sequence THHKKMKVHSAGRRDVRAKAHITALKS. The helical transmembrane segment at 224–244 threads the bilayer; sequence LGCFLLLHLVYIMASPFSIAS. The Extracellular portion of the chain corresponds to 245–253; that stretch reads KTYPPDLTS. A helical membrane pass occupies residues 254 to 274; sequence VFIWETLMAAYPSLHSLILIM. Residues 275–299 are Cytoplasmic-facing; it reads GIPRVKQTCQKILWKTVCARRCWGP.

Belongs to the G-protein coupled receptor T2R family.

It is found in the membrane. Receptor that may play a role in the perception of bitterness and is gustducin-linked. May play a role in sensing the chemical composition of the gastrointestinal content. The activity of this receptor may stimulate alpha gustducin, mediate PLC-beta-2 activation and lead to the gating of TRPM5. The protein is Taste receptor type 2 member 5 (TAS2R5) of Pan paniscus (Pygmy chimpanzee).